Consider the following 238-residue polypeptide: Ribosomal RNA small subunit methyltransferase G (238 aa).

S-adenosyl-L-methionine is bound by residues glycine 77, phenylalanine 82, 128-129, and arginine 147; that span reads AE. The interval 219 to 238 is disordered; sequence KETPNKYPRKPGTPNKLPIE.

It belongs to the methyltransferase superfamily. RNA methyltransferase RsmG family.

Its subcellular location is the cytoplasm. In terms of biological role, specifically methylates the N7 position of guanine in position 535 of 16S rRNA. The sequence is that of Ribosomal RNA small subunit methyltransferase G from Listeria monocytogenes serovar 1/2a (strain ATCC BAA-679 / EGD-e).